Reading from the N-terminus, the 298-residue chain is ATP phosphoribosyltransferase (298 aa).

The protein belongs to the ATP phosphoribosyltransferase family. Long subfamily. Mg(2+) is required as a cofactor.

Its subcellular location is the cytoplasm. It catalyses the reaction 1-(5-phospho-beta-D-ribosyl)-ATP + diphosphate = 5-phospho-alpha-D-ribose 1-diphosphate + ATP. Its pathway is amino-acid biosynthesis; L-histidine biosynthesis; L-histidine from 5-phospho-alpha-D-ribose 1-diphosphate: step 1/9. With respect to regulation, feedback inhibited by histidine. Catalyzes the condensation of ATP and 5-phosphoribose 1-diphosphate to form N'-(5'-phosphoribosyl)-ATP (PR-ATP). Has a crucial role in the pathway because the rate of histidine biosynthesis seems to be controlled primarily by regulation of HisG enzymatic activity. The sequence is that of ATP phosphoribosyltransferase from Aliivibrio fischeri (strain ATCC 700601 / ES114) (Vibrio fischeri).